The sequence spans 610 residues: Phosphoenolpyruvate carboxykinase [GTP] (610 aa).

Residues Arg-82 and 221–223 (YGG) contribute to the substrate site. Residues Lys-230 and His-250 each coordinate Mn(2+). Ser-272 lines the substrate pocket. Residue 273–278 (ACGKTN) participates in GTP binding. Cys-274 is an active-site residue. Asp-297 is a binding site for Mn(2+). 387–389 (NSR) is a binding site for substrate. GTP is bound by residues Arg-389, Arg-420, and 515–518 (FGDN).

Belongs to the phosphoenolpyruvate carboxykinase [GTP] family. As to quaternary structure, monomer. It depends on Mn(2+) as a cofactor.

Its subcellular location is the cytoplasm. The enzyme catalyses oxaloacetate + GTP = phosphoenolpyruvate + GDP + CO2. Its pathway is carbohydrate biosynthesis; gluconeogenesis. Involved in the gluconeogenesis. Catalyzes the conversion of oxaloacetate (OAA) to phosphoenolpyruvate (PEP), the rate-limiting step in the metabolic pathway that produces glucose from lactate and other precursors derived from the citric acid cycle. This chain is Phosphoenolpyruvate carboxykinase [GTP], found in Corynebacterium glutamicum (strain ATCC 13032 / DSM 20300 / JCM 1318 / BCRC 11384 / CCUG 27702 / LMG 3730 / NBRC 12168 / NCIMB 10025 / NRRL B-2784 / 534).